The primary structure comprises 106 residues: MSYYMSPIVQKITGADPGTFVLFYVPECPYCQRALSTLRERNLPFKGYNINNISGNMPRLLQVLTTYSNLTGFNPYHTTKPIIFINGKFIGGMDDLAKYLDVQFTQ.

One can recognise a Glutaredoxin domain in the interval 8–106 (IVQKITGADP…AKYLDVQFTQ (99 aa)). A disulfide bridge links Cys-28 with Cys-31.

This sequence belongs to the glutaredoxin family.

Its subcellular location is the virion. The chain is Probable glutaredoxin from Acanthamoeba polyphaga mimivirus (APMV).